A 139-amino-acid chain; its full sequence is Ribosome-binding factor A (139 aa).

Residues 120 to 139 are disordered; that stretch reads PENLLAVEDNTDEDDESFSE. A compositionally biased stretch (acidic residues) spans 128–139; sequence DNTDEDDESFSE.

It belongs to the RbfA family. As to quaternary structure, monomer. Binds 30S ribosomal subunits, but not 50S ribosomal subunits or 70S ribosomes.

It is found in the cytoplasm. One of several proteins that assist in the late maturation steps of the functional core of the 30S ribosomal subunit. Associates with free 30S ribosomal subunits (but not with 30S subunits that are part of 70S ribosomes or polysomes). Required for efficient processing of 16S rRNA. May interact with the 5'-terminal helix region of 16S rRNA. The chain is Ribosome-binding factor A from Nostoc punctiforme (strain ATCC 29133 / PCC 73102).